A 163-amino-acid chain; its full sequence is Pheromone-binding protein (163 aa).

An N-terminal signal peptide occupies residues 1-21 (MLRKISLLLLPVFVAINLVHS). Cystine bridges form between C40/C75, C71/C129, and C118/C138.

It belongs to the PBP/GOBP family. In terms of assembly, homodimer. In terms of tissue distribution, antenna.

Its function is as follows. This major soluble protein in olfactory sensilla of male moths might serve to solubilize the extremely hydrophobic pheromone molecules and to transport pheromone through the aqueous lymph to receptors located on olfactory cilia. This chain is Pheromone-binding protein, found in Antheraea polyphemus (Polyphemus moth).